The chain runs to 65 residues: Protein C13 (65 aa).

The protein belongs to the poxviridae C13 protein family.

The protein is Protein C13 of Vaccinia virus (strain Copenhagen) (VACV).